A 347-amino-acid polypeptide reads, in one-letter code: Quinolinate synthase (347 aa).

Iminosuccinate-binding residues include histidine 47 and serine 68. Cysteine 113 lines the [4Fe-4S] cluster pocket. Iminosuccinate contacts are provided by residues 139-141 (YAN) and serine 156. Cysteine 200 contacts [4Fe-4S] cluster. Iminosuccinate is bound by residues 226–228 (HPE) and threonine 243. Cysteine 297 serves as a coordination point for [4Fe-4S] cluster.

It belongs to the quinolinate synthase family. Type 1 subfamily. Requires [4Fe-4S] cluster as cofactor.

The protein localises to the cytoplasm. The enzyme catalyses iminosuccinate + dihydroxyacetone phosphate = quinolinate + phosphate + 2 H2O + H(+). Its pathway is cofactor biosynthesis; NAD(+) biosynthesis; quinolinate from iminoaspartate: step 1/1. Functionally, catalyzes the condensation of iminoaspartate with dihydroxyacetone phosphate to form quinolinate. This Salmonella typhi protein is Quinolinate synthase.